A 175-amino-acid polypeptide reads, in one-letter code: Protein CENTRORADIALIS-like (175 aa).

Belongs to the phosphatidylethanolamine-binding protein family. Expressed in tissues surrounding vascular bundles in hypocotyl of 2-week-old plants.

It is found in the cytoplasm. In terms of biological role, may form complexes with phosphorylated ligands by interfering with kinases and their effectors. Can substitute for TERMINAL FLOWER 1 (in vitro). This is Protein CENTRORADIALIS-like (CEN) from Arabidopsis thaliana (Mouse-ear cress).